The chain runs to 92 residues: Small ribosomal subunit protein uS19c (92 aa).

The protein belongs to the universal ribosomal protein uS19 family.

The protein resides in the plastid. Its subcellular location is the chloroplast. Its function is as follows. Protein S19 forms a complex with S13 that binds strongly to the 16S ribosomal RNA. This is Small ribosomal subunit protein uS19c from Phalaenopsis aphrodite subsp. formosana (Moth orchid).